Here is a 456-residue protein sequence, read N- to C-terminus: Tyrosine phenol-lyase (456 aa).

An N6-(pyridoxal phosphate)lysine modification is found at Lys-257.

This sequence belongs to the beta-eliminating lyase family. In terms of assembly, homotetramer. Requires pyridoxal 5'-phosphate as cofactor.

The enzyme catalyses L-tyrosine + H2O = phenol + pyruvate + NH4(+). This chain is Tyrosine phenol-lyase (tpl), found in Citrobacter freundii.